Consider the following 136-residue polypeptide: Large ribosomal subunit protein uL14 (136 aa).

It belongs to the universal ribosomal protein uL14 family.

In Dictyostelium discoideum (Social amoeba), this protein is Large ribosomal subunit protein uL14 (rpl23).